The chain runs to 351 residues: MSGIVTYGSYIPRYRIKPDEIARVWGENPERIKNGIFILSKSVPAPDEDVATISVEAARNALKRKKINPKEIGAIYVGSESHPYAVKPTATIVGSAIGVDFSLFAADYEFACKAGTAGMQNVKAMVDAGMIKYGLAIGADTSQGAPGDALEYSASAGGSAFIIGKDDVIAEINSTLSVASDTPDFWRREGQPYPSHGERFTGEPAYFRHVVNAAKMMMERMETQPKDYDYVVFHQPNGKFPTRAAKLLGFEEKQYKDGLITPYIGNTYSGSMMTGLSSILDVSKPGDHILAVSFGSGAGSDAFDITVTDRIEEMDRNKAPTIKKMLEKIKWVDYAIYAKYKKKIVLGDGIE.

E80 acts as the Proton donor/acceptor in catalysis. The active-site Acyl-thioester intermediate is the C112. (3S)-3-hydroxy-3-methylglutaryl-CoA contacts are provided by C112 and S153. R199 provides a ligand contact to CoA. (3S)-3-hydroxy-3-methylglutaryl-CoA-binding residues include T201 and H234. H234 functions as the Proton donor/acceptor in the catalytic mechanism. A CoA-binding site is contributed by K239. 3 residues coordinate (3S)-3-hydroxy-3-methylglutaryl-CoA: R243, N266, and S296.

This sequence belongs to the thiolase-like superfamily. Archaeal HMG-CoA synthase family. Interacts with acetoacetyl-CoA thiolase that catalyzes the precedent step in the pathway and with a DUF35 protein. The acetoacetyl-CoA thiolase/HMG-CoA synthase complex channels the intermediate via a fused CoA-binding site, which allows for efficient coupling of the endergonic thiolase reaction with the exergonic HMGCS reaction.

The catalysed reaction is acetoacetyl-CoA + acetyl-CoA + H2O = (3S)-3-hydroxy-3-methylglutaryl-CoA + CoA + H(+). Its pathway is metabolic intermediate biosynthesis; (R)-mevalonate biosynthesis; (R)-mevalonate from acetyl-CoA: step 2/3. In terms of biological role, catalyzes the condensation of acetyl-CoA with acetoacetyl-CoA to form 3-hydroxy-3-methylglutaryl-CoA (HMG-CoA). Functions in the mevalonate (MVA) pathway leading to isopentenyl diphosphate (IPP), a key precursor for the biosynthesis of isoprenoid compounds that are building blocks of archaeal membrane lipids. The protein is Hydroxymethylglutaryl-CoA synthase of Thermoplasma volcanium (strain ATCC 51530 / DSM 4299 / JCM 9571 / NBRC 15438 / GSS1).